Reading from the N-terminus, the 307-residue chain is Protoheme IX farnesyltransferase (307 aa).

Transmembrane regions (helical) follow at residues 32–52 (VVEL…RGIP), 54–74 (LWLV…AGAF), 105–125 (LVFA…FTNW), 126–146 (LAAG…TLIL), 169–189 (WAVV…VIFL), 222–242 (VVGL…LLLI), 244–264 (VARM…WFLY), and 287–307 (GSIA…LLPF).

The protein belongs to the UbiA prenyltransferase family. Protoheme IX farnesyltransferase subfamily.

The protein localises to the cell membrane. The enzyme catalyses heme b + (2E,6E)-farnesyl diphosphate + H2O = Fe(II)-heme o + diphosphate. Its pathway is porphyrin-containing compound metabolism; heme O biosynthesis; heme O from protoheme: step 1/1. In terms of biological role, converts heme B (protoheme IX) to heme O by substitution of the vinyl group on carbon 2 of heme B porphyrin ring with a hydroxyethyl farnesyl side group. This chain is Protoheme IX farnesyltransferase, found in Leifsonia xyli subsp. xyli (strain CTCB07).